Reading from the N-terminus, the 348-residue chain is MDLPVQPPIEPMLAKAQVKVPDEAGVWSYEPKWDGFRALVFRDGDDVVLQSRNGKDLGRYFPELLDALRDELVEKCVLDGEVVVPRDIAGRVRLDWESLSQRIHPAASRIKMLAEQTPAHFIGFDALALGDRSLLKEPFRVRREALAEAVDNKRWCHVTRTSEDPALGTEWLKTFEGAGLDGVIAKRLDGPYLPGKREMVKVKHHRDADCVAMGYRIHKSGDGIGSILLGLYRDDGELQMVGGAASFTAKDRIKLLAELEPLREGDEMREGDPSRWNSAADKRWTPLRPEKVCEVAYDQMEGNSVEGRRFRHAVKFLRWRPDREPSSCTFDQLDTPLNYDLYDVLEEQ.

The active-site N6-AMP-lysine intermediate is the Lys32.

The protein belongs to the ATP-dependent DNA ligase family. A divalent metal cation serves as cofactor.

The catalysed reaction is ATP + (deoxyribonucleotide)n-3'-hydroxyl + 5'-phospho-(deoxyribonucleotide)m = (deoxyribonucleotide)n+m + AMP + diphosphate.. In terms of biological role, DNA ligase that seals nicks in double-stranded DNA during DNA replication, DNA recombination and DNA repair. Has weak intrinsic nick joining activities and accumulates DNA-adenylate. Acts as a backup for LigD in the Ku-LigD-dependent NHEJ pathway. This chain is DNA ligase C1 (ligC), found in Mycolicibacterium smegmatis (strain ATCC 700084 / mc(2)155) (Mycobacterium smegmatis).